The following is a 131-amino-acid chain: Lysosomal enzyme trafficking factor (131 aa).

Transmembrane regions (helical) follow at residues 8–28 (MGWIGVSLYLFVSAAAFYYVF) and 66–86 (LPFWLWATLFLIPYFQVFLFL).

It belongs to the LYSET family.

Its subcellular location is the golgi apparatus membrane. Its function is as follows. Required for mannose-6-phosphate-dependent trafficking of lysosomal enzymes. LYSET bridges GlcNAc-1-phosphate transferase (GNPTAB), to the membrane-bound transcription factor site-1 protease (MBTPS1), thus allowing proteolytic activation of the GNPTAB. GNPTAB is involved in the regulation of M6P-dependent Golgi-to-lysosome trafficking of lysosomal enzymes. LYSET is thus an essential factor for maturation and delivery of lysosomal hydrolases. The chain is Lysosomal enzyme trafficking factor (lyset-a) from Xenopus laevis (African clawed frog).